Consider the following 485-residue polypeptide: Glutamyl-tRNA(Gln) amidotransferase subunit A (485 aa).

Catalysis depends on charge relay system residues Lys76 and Ser151. Ser175 serves as the catalytic Acyl-ester intermediate.

The protein belongs to the amidase family. GatA subfamily. As to quaternary structure, heterotrimer of A, B and C subunits.

The enzyme catalyses L-glutamyl-tRNA(Gln) + L-glutamine + ATP + H2O = L-glutaminyl-tRNA(Gln) + L-glutamate + ADP + phosphate + H(+). In terms of biological role, allows the formation of correctly charged Gln-tRNA(Gln) through the transamidation of misacylated Glu-tRNA(Gln) in organisms which lack glutaminyl-tRNA synthetase. The reaction takes place in the presence of glutamine and ATP through an activated gamma-phospho-Glu-tRNA(Gln). This is Glutamyl-tRNA(Gln) amidotransferase subunit A from Chlorobium luteolum (strain DSM 273 / BCRC 81028 / 2530) (Pelodictyon luteolum).